Consider the following 418-residue polypeptide: Neurotensin receptor type 1 (418 aa).

Topologically, residues 1–67 are extracellular; the sequence is MRLNSSAPGT…TDIYSKVLVT (67 aa). Asparagine 4, asparagine 37, and asparagine 41 each carry an N-linked (GlcNAc...) asparagine glycan. A helical transmembrane segment spans residues 68–88; it reads AVYLALFVVGTVGNTVTAFTL. Over 89–102 the chain is Cytoplasmic; sequence ARKKSLQSLQSTVH. A helical membrane pass occupies residues 103–122; that stretch reads YHLGSLALSDLLTLLLAMPV. The Extracellular segment spans residues 123–142; that stretch reads ELYNFIWVHHPWAFGDAGCR. An intrachain disulfide couples cysteine 141 to cysteine 224. The helical transmembrane segment at 143–164 threads the bilayer; the sequence is GYYFLRDACTYATALNVASLSV. The Cytoplasmic segment spans residues 165–184; it reads ERYLAICHPFKAKTLMSRSR. Residues 185 to 205 form a helical membrane-spanning segment; the sequence is TKKFISAIWLASALLAVPMLF. At 206–234 the chain is on the extracellular side; that stretch reads TMGEQNRSADGQHAGGLVCTPTIHTATVK. Residues 235–259 form a helical membrane-spanning segment; the sequence is VVIQVNTFMSFIFPMVVISVLNTII. At 260–303 the chain is on the cytoplasmic side; that stretch reads ANKLTVMVRQAAEQGQVCTVGGEHSTFSMAIEPGRVQALRHGVR. A helical membrane pass occupies residues 304-325; the sequence is VLRAVVIAFVVCWLPYHVRRLM. The interval 321–344 is neurotensin binding; it reads VRRLMFCYISDEQWTPFLYDFYHY. At 326-343 the chain is on the extracellular side; it reads FCYISDEQWTPFLYDFYH. A helical membrane pass occupies residues 344–364; that stretch reads YFYMVTNALFYVSSTINPILY. Over 365 to 418 the chain is Cytoplasmic; that stretch reads NLVSANFRHIFLATLACLCPVWRRRRKRPAFSRKADSVSSNHTLSSNATRETLY. Residues cysteine 381 and cysteine 383 are each lipidated (S-palmitoyl cysteine).

Belongs to the G-protein coupled receptor 1 family. Neurotensin receptor subfamily. NTSR1 sub-subfamily. As to quaternary structure, interacts (palmitoylated form) with GNA11. N-glycosylated. In terms of processing, palmitoylated; this is required for normal localization at membrane rafts and normal GNA11-mediated activation of down-stream signaling cascades. The palmitoylation level increases in response to neurotensin treatment. In terms of tissue distribution, expressed in prostate (at protein level). Detected in colon and peripheral blood mononuclear cells. Detected at very low levels in brain.

Its subcellular location is the cell membrane. It is found in the membrane raft. Its function is as follows. G-protein coupled receptor for the tridecapeptide neurotensin (NTS). Signaling is effected via G proteins that activate a phosphatidylinositol-calcium second messenger system. Signaling leads to the activation of downstream MAP kinases and protects cells against apoptosis. In Homo sapiens (Human), this protein is Neurotensin receptor type 1 (NTSR1).